The chain runs to 523 residues: 2-isopropylmalate synthase (523 aa).

Positions 5–267 (VIIFDTTLRD…ETGINAKEIH (263 aa)) constitute a Pyruvate carboxyltransferase domain. Residues aspartate 14, histidine 202, histidine 204, and asparagine 238 each contribute to the Mn(2+) site. The interval 392–523 (QLKQLVVHSD…QQKARSLGGV (132 aa)) is regulatory domain.

Belongs to the alpha-IPM synthase/homocitrate synthase family. LeuA type 1 subfamily. Homodimer. It depends on Mn(2+) as a cofactor.

Its subcellular location is the cytoplasm. The enzyme catalyses 3-methyl-2-oxobutanoate + acetyl-CoA + H2O = (2S)-2-isopropylmalate + CoA + H(+). Its pathway is amino-acid biosynthesis; L-leucine biosynthesis; L-leucine from 3-methyl-2-oxobutanoate: step 1/4. Functionally, catalyzes the condensation of the acetyl group of acetyl-CoA with 3-methyl-2-oxobutanoate (2-ketoisovalerate) to form 3-carboxy-3-hydroxy-4-methylpentanoate (2-isopropylmalate). The chain is 2-isopropylmalate synthase from Shewanella woodyi (strain ATCC 51908 / MS32).